The following is a 277-amino-acid chain: MPSVPSEAPASPSPKRVRTRHFQAAKEEGSRFTGLTSYDTLTAQIFDEAGIDFLLVGDSAANTVLGYDTTLPMTVDELIPLTRAVARAAKRAFVVADLPFGSYETGPQEALRTAVRFMKETGAHAVKLEGGERSAEQIRRIVDAGVPVMGHIGFTPQSEHGLGGHLVQGRGQGAEQVVDDAHAVEEAGAFAVVLEMVPADVAQRVTQELRIPTIGVGAGPHVDGQLLVWTDWAGFTTGRVPRFAKQYADLKDVLTEAARMYRDEVGSGVFPGPEHSF.

Positions 58 and 97 each coordinate Mg(2+). 3-methyl-2-oxobutanoate-binding positions include 58 to 59, D97, and K127; that span reads DS. Mg(2+) is bound at residue E129. The Proton acceptor role is filled by E195.

The protein belongs to the PanB family. In terms of assembly, homodecamer; pentamer of dimers. Mg(2+) is required as a cofactor.

The protein localises to the cytoplasm. It carries out the reaction 3-methyl-2-oxobutanoate + (6R)-5,10-methylene-5,6,7,8-tetrahydrofolate + H2O = 2-dehydropantoate + (6S)-5,6,7,8-tetrahydrofolate. The protein operates within cofactor biosynthesis; (R)-pantothenate biosynthesis; (R)-pantoate from 3-methyl-2-oxobutanoate: step 1/2. In terms of biological role, catalyzes the reversible reaction in which hydroxymethyl group from 5,10-methylenetetrahydrofolate is transferred onto alpha-ketoisovalerate to form ketopantoate. The sequence is that of 3-methyl-2-oxobutanoate hydroxymethyltransferase from Leifsonia xyli subsp. xyli (strain CTCB07).